Consider the following 355-residue polypeptide: MSSDTMFINSARLLPTENRKVKQLQRPDRKKHTRGSYAAQKQQLPNGEQPNFGHGQKQSRKRGSGRQKGRDGAAGDSANVGLTEDLKQLLSIPSGSAGSESAQKETSAGQPATGAVADRKRSVPAGGPAGKSSSEPASASSAVDGMPGLGFQSAHVPFSSPVVNHPMLAEPAATGPVLSVPFPGHVAGYMPCVNNTRVQYPLQTRNNVPMSQPMSQPMSQPMSQPMSQPMSQPISPYLPQGFQMHPQSFVGLPVAPMYPQYMSAQYQSPKQQSACQMPLRAQPPLIPSITRNALPCVSSANSTAKASVRSKGSPGSEGGSRRSQNWKSSQNVGYAGATFATDQPALSSLPKPSFV.

3 disordered regions span residues 1–146 (MSSD…VDGM), 210–230 (MSQPMSQPMSQPMSQPMSQPM), and 301–330 (NSTAKASVRSKGSPGSEGGSRRSQNWKSSQ). Positions 39-49 (AQKQQLPNGEQ) are enriched in polar residues. Over residues 57-67 (KQSRKRGSGRQ) the composition is skewed to basic residues. The span at 91 to 110 (SIPSGSAGSESAQKETSAGQ) shows a compositional bias: polar residues. Residues 123–142 (VPAGGPAGKSSSEPASASSA) show a composition bias toward low complexity.

The protein belongs to the EDC family.

It is found in the cytoplasm. MRNA-binding protein which stimulates mRNA decapping. In Eremothecium gossypii (strain ATCC 10895 / CBS 109.51 / FGSC 9923 / NRRL Y-1056) (Yeast), this protein is Enhancer of mRNA-decapping protein 1 (EDC1).